We begin with the raw amino-acid sequence, 328 residues long: L-lactate dehydrogenase (328 aa).

Residues V18, E39, K46, Y71, and 85–86 (GA) contribute to the NAD(+) site. Positions 88 and 94 each coordinate substrate. NAD(+) contacts are provided by residues S107, 124-126 (AAN), and S149. 126-129 (NPVD) contacts substrate. 154 to 157 (DSAR) contributes to the substrate binding site. Residues R159 and H174 each contribute to the beta-D-fructose 1,6-bisphosphate site. H181 functions as the Proton acceptor in the catalytic mechanism. Residue Y226 is modified to Phosphotyrosine. Residue T235 coordinates substrate.

It belongs to the LDH/MDH superfamily. LDH family. Homotetramer.

The protein resides in the cytoplasm. It catalyses the reaction (S)-lactate + NAD(+) = pyruvate + NADH + H(+). Its pathway is fermentation; pyruvate fermentation to lactate; (S)-lactate from pyruvate: step 1/1. With respect to regulation, allosterically activated by fructose 1,6-bisphosphate (FBP). Its function is as follows. Catalyzes the conversion of lactate to pyruvate. In Streptococcus sanguinis (strain SK36), this protein is L-lactate dehydrogenase.